A 333-amino-acid polypeptide reads, in one-letter code: D-fructose 1,6-bisphosphatase class 2/sedoheptulose 1,7-bisphosphatase (333 aa).

Asp-33, Glu-57, Asp-85, and Glu-88 together coordinate Mn(2+). Substrate is bound by residues 88–90, Tyr-119, 164–166, and 186–188; these read EGT, RAR, and DGD. Glu-213 is a Mn(2+) binding site.

Belongs to the FBPase class 2 family. As to quaternary structure, homotetramer. Mn(2+) is required as a cofactor.

The catalysed reaction is beta-D-fructose 1,6-bisphosphate + H2O = beta-D-fructose 6-phosphate + phosphate. It catalyses the reaction D-sedoheptulose 1,7-bisphosphate + H2O = D-sedoheptulose 7-phosphate + phosphate. It functions in the pathway carbohydrate biosynthesis; Calvin cycle. Catalyzes the hydrolysis of fructose 1,6-bisphosphate (Fru 1,6-P2) and sedoheptulose 1,7-bisphosphate (Sed 1,7-P2) to fructose 6-phosphate and sedoheptulose 7-phosphate, respectively. The polypeptide is D-fructose 1,6-bisphosphatase class 2/sedoheptulose 1,7-bisphosphatase (Prochlorococcus marinus (strain MIT 9515)).